The chain runs to 376 residues: E3 ubiquitin-protein ligase RNF133 (376 aa).

The PA domain occupies 65–167 (SSTLKRVAGV…LKGTEIFHLI (103 aa)). The chain crosses the membrane as a helical span at residues 190–210 (YLVSFVIVTTATLAYFIFYHI). Residues 256-297 (CVICFEHYKPNDIVRILTCKHFFHKNCIDPWILSHGTCPICK) form an RING-type; atypical zinc finger. Residues 328–376 (TLSPSEEETNNEVSPAGTSDKVIHVEENPTSQNNDSQPHSVVEDVHPSP) form a disordered region. A compositionally biased stretch (polar residues) spans 355-366 (NPTSQNNDSQPH).

As to quaternary structure, interacts with E3 ligase UBE2J1. Post-translationally, auto-ubiquitinated.

The protein resides in the endoplasmic reticulum membrane. The catalysed reaction is S-ubiquitinyl-[E2 ubiquitin-conjugating enzyme]-L-cysteine + [acceptor protein]-L-lysine = [E2 ubiquitin-conjugating enzyme]-L-cysteine + N(6)-ubiquitinyl-[acceptor protein]-L-lysine.. It functions in the pathway protein modification; protein ubiquitination. Its function is as follows. Has E3 ubiquitin-protein ligase activity. Plays a role in male fecundity through the interaction with the E2 ubituitin-protein ligase UBE2J1. This is E3 ubiquitin-protein ligase RNF133 (RNF133) from Macaca fascicularis (Crab-eating macaque).